The following is a 78-amino-acid chain: U7-lycotoxin-Ls1e (78 aa).

The N-terminal stretch at 1 to 22 (MKLIIFTGLALLLIVSLIDVEA) is a signal peptide. The propeptide occupies 23 to 26 (QNEG).

Belongs to the neurotoxin 19 (CSTX) family. 07 (U7-Lctx) subfamily. Post-translationally, contains 4 disulfide bonds. Expressed by the venom gland.

It localises to the secreted. This is U7-lycotoxin-Ls1e from Lycosa singoriensis (Wolf spider).